A 1227-amino-acid polypeptide reads, in one-letter code: Beta-alanyl-bioamine nonribosomal peptide synthetase (1227 aa).

The adenylation stretch occupies residues 1–850 (MPQSTAQLKS…FGKNSRDFKL (850 aa)). Positions 851 to 931 (SRGRERARKV…SILTSLQNTE (81 aa)) constitute a Carrier domain. Ser-892 carries the post-translational modification O-(pantetheine 4'-phosphoryl)serine. A condensation region spans residues 932–1227 (SDFLKTQEPF…YMIKELNPSS (296 aa)).

The protein belongs to the NRP synthetase family. Requires pantetheine 4'-phosphate as cofactor. In virgin and paired males, bilaterally expressed in some cells in the head. During pairing, expressed throughout the ventral side of the body probably in ciliated neurons. Highly expressed in virgin females in cells throughout the body and only weakly expressed in sexually mature females. In virgin females, expressed in some cells in the head and on the dorsal surface and lateral edges of body.

The enzyme catalyses tryptamine + beta-alanine + ATP = beta-alanyl-tryptamine + AMP + diphosphate + H(+). The catalysed reaction is beta-alanine + ATP + H(+) = beta-alanyl-5'-AMP + diphosphate. It carries out the reaction beta-alanyl-5'-AMP + holo-[peptidyl-carrier protein] = beta-alanyl-[peptidyl-carrier protein] + AMP + H(+). It catalyses the reaction beta-alanyl-[peptidyl-carrier protein] + tryptamine = beta-alanyl-tryptamine + holo-[peptidyl-carrier protein] + H(+). In terms of biological role, catalyzes the condensation of beta-alanine with tryptamine to form beta-alanyl-tryptamine (BATT). Beta-alanyl-tryptamine is an essential pheromone produced by the male that stimulates female sexual development during pairing. The sequence is that of Beta-alanyl-bioamine nonribosomal peptide synthetase from Schistosoma mansoni (Blood fluke).